The primary structure comprises 167 residues: Insertion element IS1 1 protein InsB (167 aa).

Belongs to the transposase 27 family.

Its function is as follows. Absolutely required for transposition of IS1. This Escherichia coli (strain K12) protein is Insertion element IS1 1 protein InsB (insB1).